The chain runs to 457 residues: MKTVEIIEGIASGRTSARDVCEEALATIGATDGLINAFTCRTVERARAEADAIDVRRARGEVLPPLAGLPYAVKNLFDIEGVTTLAGSKINRTLPPARADAVLVQRLKAAGAVLLGGLNMDEFAYGFTTENTHYGPTRNPHDTGRIAGGSSGGSGAAIAAGQVPLSLGSDTNGSIRVPASLCGVWGLKPTFGRLSRRGTYPFVHSIDHLGPLADSVEGLALAYDAMQGPDPLDPGCSASRIQPSVPVLSQGIAGLRIGVLGGWFRDNAGPAARAAVDVAALTLGASEVVMWPDAEIGRAAAFVITASEGGCLHLDDLRIRPQDFEPLSVDRFISGVLQPVAWYLRAQRFRRVYRDKVNALFRDWDILIAPATPISAPAIGTEWIEVNGTRHPCRPAMGLLTQPVSFAGCPVVAAPTWPGENDGMPIGVQLIAAPWNESLCLRAGKVLQDTGIARLKC.

Residues lysine 74 and serine 150 each act as charge relay system in the active site. Serine 174 functions as the Acyl-ester intermediate in the catalytic mechanism.

This sequence belongs to the amidase family. In terms of assembly, heterotetramer consisting of 2 AtzE and 2 AtzG subunits.

It carries out the reaction 1-carboxybiuret + H2O = urea-1,3-dicarboxylate + NH4(+). Its pathway is xenobiotic degradation; atrazine degradation. Functionally, hydrolyzes 1-carboxybiuret to urea-1,3-dicarboxylate and NH(3). The chain is 1-carboxybiuret hydrolase subunit AtzE from Pseudomonas sp. (strain ADP).